The primary structure comprises 513 residues: Probable E3 ubiquitin-protein ligase XBOS34 (513 aa).

3 ANK repeats span residues 39 to 69 (EGKT…NVNA), 75 to 104 (YCGT…NPFI), and 108 to 137 (DCHT…LFCG). Composition is skewed to polar residues over residues 309–327 (ITTT…NSLN) and 335–355 (SAPS…STYN). 2 disordered regions span residues 309–378 (ITTT…QNST) and 423–455 (SADG…SNSG). Residues 361-378 (GTSSGQSSSKHNKSQNST) are compositionally biased toward low complexity. The segment covering 436–446 (AENEGDAKPAE) has biased composition (basic and acidic residues). The segment at 462-501 (CVICLDAPVEGACIPCGHMAGCMSCLKDIESKKWGCPICR) adopts an RING-type zinc-finger fold.

The catalysed reaction is S-ubiquitinyl-[E2 ubiquitin-conjugating enzyme]-L-cysteine + [acceptor protein]-L-lysine = [E2 ubiquitin-conjugating enzyme]-L-cysteine + N(6)-ubiquitinyl-[acceptor protein]-L-lysine.. The protein operates within protein modification; protein ubiquitination. This chain is Probable E3 ubiquitin-protein ligase XBOS34 (XBOS34), found in Oryza sativa subsp. japonica (Rice).